Consider the following 487-residue polypeptide: Structure-specific endonuclease subunit SLX1 (487 aa).

The GIY-YIG domain occupies 27 to 109; that stretch reads PFYACYLLRS…QKPELSRHLR (83 aa). The disordered stretch occupies residues 44–69; that stretch reads RTYVGSTPDPPRRIRQHNGELKQGAW. The segment at 262 to 328 adopts an SLX1-type zinc-finger fold; it reads CHLCQERIAF…LPYQGLCPNC (67 aa). Positions 359–396 are enriched in basic and acidic residues; the sequence is KAEKAEKAEKAEKAEKAEKAEKAGRKVRQREMKTKKGD. 2 disordered regions span residues 359–407 and 433–475; these read KAEK…QPES and PARS…SEPE. Polar residues predominate over residues 397–407; that stretch reads QSNGTVAQPES. The segment covering 438–455 has biased composition (basic and acidic residues); sequence KSKDVGGEGIRHSTHTDD. The span at 465 to 475 shows a compositional bias: acidic residues; the sequence is ETEDESESEPE.

The protein belongs to the SLX1 family. Forms a heterodimer with SLX4. The cofactor is a divalent metal cation.

The protein resides in the nucleus. Catalytic subunit of the SLX1-SLX4 structure-specific endonuclease that resolves DNA secondary structures generated during DNA repair and recombination. Has endonuclease activity towards branched DNA substrates, introducing single-strand cuts in duplex DNA close to junctions with ss-DNA. This chain is Structure-specific endonuclease subunit SLX1, found in Cryptococcus neoformans var. neoformans serotype D (strain B-3501A) (Filobasidiella neoformans).